The chain runs to 227 residues: MGITGMVYVVTMVFLLIVLILSSSTVGYDYFQFTQQYQLAVCNSNRTPCKDPPDKLFTVHGLWPSSMAGPDPSNCPIRNIRKREKLLEPQLAIIWPNVFDRTKNKLFWDKEWMKHGTCGYPTIDNENHYFETVIKMYISKKQNVSRILSKAKIEPDGKKRALLDIENAIRNGADNKKPKLKCQKKGTTTELVEITLCSDKSGEHFIDCPHPFEPISPHYCPTNNIKY.

Positions Met1–Gly27 are cleaved as a signal peptide. Gln36 lines the RNA pocket. Cys42 and Cys49 are joined by a disulfide. N-linked (GlcNAc...) asparagine glycosylation is present at Asn45. RNA is bound by residues His60, Asn97–Val98, Phe107, Lys110–Glu111, and Lys114–His115. The active-site Proton donor is His60. Cys75 and Cys118 are joined by a disulfide. Glu111 is a catalytic residue. His115 functions as the Proton acceptor in the catalytic mechanism. N-linked (GlcNAc...) asparagine glycosylation is present at Asn143. 2 disulfide bridges follow: Cys182–Cys220 and Cys197–Cys208.

The protein belongs to the RNase T2 family. In terms of processing, N-glycan at Asn-45 consists of disaccharide (GlcNAc-GlcNAc). N-linked core structure at Asn-143 contains xylose.

The enzyme catalyses a ribonucleotidyl-ribonucleotide-RNA + H2O = a 3'-end 3'-phospho-ribonucleotide-RNA + a 5'-end dephospho-ribonucleoside-RNA + H(+). Self-incompatibility (SI) is the inherited ability of a flowering plant to prevent self-fertilization by discriminating between self and non-self pollen during pollination. In many species, self-incompatibility is controlled by the single, multiallelic locus S. The polypeptide is Ribonuclease S-5 (Pyrus pyrifolia (Chinese pear)).